We begin with the raw amino-acid sequence, 280 residues long: Bifunctional protein FolD (280 aa).

NADP(+) contacts are provided by residues 159–161 (GRS), S184, and I225.

Belongs to the tetrahydrofolate dehydrogenase/cyclohydrolase family. As to quaternary structure, homodimer.

The catalysed reaction is (6R)-5,10-methylene-5,6,7,8-tetrahydrofolate + NADP(+) = (6R)-5,10-methenyltetrahydrofolate + NADPH. It catalyses the reaction (6R)-5,10-methenyltetrahydrofolate + H2O = (6R)-10-formyltetrahydrofolate + H(+). It participates in one-carbon metabolism; tetrahydrofolate interconversion. Functionally, catalyzes the oxidation of 5,10-methylenetetrahydrofolate to 5,10-methenyltetrahydrofolate and then the hydrolysis of 5,10-methenyltetrahydrofolate to 10-formyltetrahydrofolate. This Methanosphaerula palustris (strain ATCC BAA-1556 / DSM 19958 / E1-9c) protein is Bifunctional protein FolD.